The chain runs to 387 residues: GTPase Obg (387 aa).

One can recognise an Obg domain in the interval 1-159; the sequence is MKFVDEAIIR…RSLKLELLLL (159 aa). In terms of domain architecture, OBG-type G spans 160-333; the sequence is ADVGLLGMPN…LAVKLLDFIA (174 aa). Residues 166 to 173, 191 to 195, 213 to 216, 283 to 286, and 314 to 316 contribute to the GTP site; these read GMPNAGKS, FTTLV, DIPG, NKAD, and SAY. Residues serine 173 and threonine 193 each coordinate Mg(2+).

This sequence belongs to the TRAFAC class OBG-HflX-like GTPase superfamily. OBG GTPase family. As to quaternary structure, monomer. It depends on Mg(2+) as a cofactor.

Its subcellular location is the cytoplasm. Its function is as follows. An essential GTPase which binds GTP, GDP and possibly (p)ppGpp with moderate affinity, with high nucleotide exchange rates and a fairly low GTP hydrolysis rate. Plays a role in control of the cell cycle, stress response, ribosome biogenesis and in those bacteria that undergo differentiation, in morphogenesis control. The chain is GTPase Obg from Shewanella halifaxensis (strain HAW-EB4).